A 378-amino-acid polypeptide reads, in one-letter code: Acetylornithine deacetylase (378 aa).

His-76 lines the Zn(2+) pocket. Residue Asp-78 is part of the active site. Asp-108 serves as a coordination point for Zn(2+). Residue Glu-140 is part of the active site. Zn(2+) is bound by residues Glu-141, Glu-165, and His-351.

The protein belongs to the peptidase M20A family. ArgE subfamily. In terms of assembly, homodimer. The cofactor is Zn(2+). Requires Co(2+) as cofactor. Glutathione serves as cofactor.

It localises to the cytoplasm. The enzyme catalyses N(2)-acetyl-L-ornithine + H2O = L-ornithine + acetate. It functions in the pathway amino-acid biosynthesis; L-arginine biosynthesis; L-ornithine from N(2)-acetyl-L-ornithine (linear): step 1/1. In terms of biological role, catalyzes the hydrolysis of the amide bond of N(2)-acetylated L-amino acids. Cleaves the acetyl group from N-acetyl-L-ornithine to form L-ornithine, an intermediate in L-arginine biosynthesis pathway, and a branchpoint in the synthesis of polyamines. The polypeptide is Acetylornithine deacetylase (Vibrio atlanticus (strain LGP32) (Vibrio splendidus (strain Mel32))).